A 281-amino-acid polypeptide reads, in one-letter code: RAD52 motif-containing protein 1 (281 aa).

The interval 1–92 is necessary for nuclear localization and for nucleolar accumulation in response to heat shock; it reads MAELISFVVP…KPLFQTSPVK (92 aa). The RRM domain occupies 15 to 98; it reads KVLLVWDLST…SPVKVRLGTR (84 aa). Residues 90 to 133 are necessary for nuclear and nucleolar localization; the sequence is PVKVRLGTRHKALQHQAFALNSSRCQELANYYFGFSGWSKRIIK.

As to quaternary structure, homodimer.

It is found in the nucleus. The protein localises to the cytoplasm. Its subcellular location is the nucleolus. The protein resides in the cajal body. It localises to the PML body. Its function is as follows. May confer resistance to the antitumor agent cisplatin. Binds to DNA and RNA. This chain is RAD52 motif-containing protein 1 (Rdm1), found in Mus musculus (Mouse).